The primary structure comprises 420 residues: Torsin-4A (420 aa).

A helical membrane pass occupies residues 130-150; sequence CLLLFIAIVCFQIFNAIENLD. ATP is bound at residue 202–209; sequence GPSGVGKS.

Belongs to the ClpA/ClpB family. Torsin subfamily.

It localises to the membrane. The sequence is that of Torsin-4A (tor4a) from Xenopus tropicalis (Western clawed frog).